Consider the following 159-residue polypeptide: Transcription elongation factor GreA (159 aa).

Residues 44–75 are a coiled coil; sequence SENAEYDAAREQQSQTEARIADLESKLSSATI.

Belongs to the GreA/GreB family.

In terms of biological role, necessary for efficient RNA polymerase transcription elongation past template-encoded arresting sites. The arresting sites in DNA have the property of trapping a certain fraction of elongating RNA polymerases that pass through, resulting in locked ternary complexes. Cleavage of the nascent transcript by cleavage factors such as GreA or GreB allows the resumption of elongation from the new 3'terminus. GreA releases sequences of 2 to 3 nucleotides. This chain is Transcription elongation factor GreA, found in Chlorobium phaeovibrioides (strain DSM 265 / 1930) (Prosthecochloris vibrioformis (strain DSM 265)).